A 1226-amino-acid chain; its full sequence is DNA-directed RNA polymerase subunit beta'' (1226 aa).

The Zn(2+) site is built by Cys223, Cys297, Cys304, and Cys307.

The protein belongs to the RNA polymerase beta' chain family. RpoC2 subfamily. In terms of assembly, in plastids the minimal PEP RNA polymerase catalytic core is composed of four subunits: alpha, beta, beta', and beta''. When a (nuclear-encoded) sigma factor is associated with the core the holoenzyme is formed, which can initiate transcription. Zn(2+) serves as cofactor.

It is found in the plastid. The protein localises to the chloroplast. The catalysed reaction is RNA(n) + a ribonucleoside 5'-triphosphate = RNA(n+1) + diphosphate. DNA-dependent RNA polymerase catalyzes the transcription of DNA into RNA using the four ribonucleoside triphosphates as substrates. The sequence is that of DNA-directed RNA polymerase subunit beta'' from Pyropia yezoensis (Susabi-nori).